Here is a 213-residue protein sequence, read N- to C-terminus: Iron sulfur cluster assembly protein 1, mitochondrial (213 aa).

The protein belongs to the NifU family. As to quaternary structure, component of the core Fe-S cluster (ISC) assembly machinery. Requires [2Fe-2S] cluster as cofactor.

It is found in the mitochondrion matrix. Its pathway is cofactor biosynthesis; iron-sulfur cluster biosynthesis. In terms of biological role, scaffold protein for the de novo synthesis of iron-sulfur (Fe-S) clusters within mitochondria, which is required for maturation of both mitochondrial and cytoplasmic [2Fe-2S] and [4Fe-4S] proteins. First, a [2Fe-2S] cluster is transiently assembled on the scaffold protein ISU1. In a second step, the cluster is released from ISU1, transferred to a glutaredoxin, followed by the formation of mitochondrial [2Fe-2S] proteins, the synthesis of [4Fe-4S] clusters and their target-specific insertion into the recipient apoproteins. Cluster assembly on ISU1 depends on the function of the cysteine desulfurase complex NFS1-ISD11, which serves as the sulfur donor for cluster synthesis, the iron-binding protein frataxin as the putative iron donor, and the electron transfer chain comprised of ferredoxin reductase and ferredoxin, which receive their electrons from NADH. This chain is Iron sulfur cluster assembly protein 1, mitochondrial (ISU1), found in Candida glabrata (strain ATCC 2001 / BCRC 20586 / JCM 3761 / NBRC 0622 / NRRL Y-65 / CBS 138) (Yeast).